A 393-amino-acid polypeptide reads, in one-letter code: Protein DDI1 homolog 2 (393 aa).

Residues 1 to 81 (MLITVYCVRR…VILRQKEAPE (81 aa)) enclose the Ubiquitin-like domain. The interval 82–127 (TRPAAPFPGLDFSTIAVPGASSQPDPSQPQAPPPPPDTSSFPQGLD) is disordered. Pro residues predominate over residues 107–118 (PSQPQAPPPPPD). Residue aspartate 246 is part of the active site. The short motif at 370–389 (EEIADRELAEVLQKSADEAD) is the Ubiquitin-binding element.

This sequence belongs to the DDI1 family. In terms of assembly, homodimer.

The protein resides in the cytoplasm. It localises to the cytosol. The protein localises to the chromosome. In terms of biological role, aspartic protease that mediates the cleavage of NFE2L1/NRF1 at 'Leu-104', thereby promoting release of NFE2L1/NRF1 from the endoplasmic reticulum membrane. Ubiquitination of NFE2L1/NRF1 is a prerequisite for cleavage, suggesting that DDI2 specifically recognizes and binds ubiquitinated NFE2L1/NRF1. Seems to act as a proteasomal shuttle which links the proteasome and replication fork proteins like RTF2. Required for cellular survival following replication stress. In Xenopus laevis (African clawed frog), this protein is Protein DDI1 homolog 2 (ddi2).